Here is a 331-residue protein sequence, read N- to C-terminus: 4-hydroxy-3-methylbut-2-enyl diphosphate reductase (331 aa).

Residue Cys-12 participates in [4Fe-4S] cluster binding. Positions 43 and 81 each coordinate (2E)-4-hydroxy-3-methylbut-2-enyl diphosphate. The dimethylallyl diphosphate site is built by His-43 and His-81. Residues His-43 and His-81 each coordinate isopentenyl diphosphate. Residue Cys-103 participates in [4Fe-4S] cluster binding. Residue His-131 coordinates (2E)-4-hydroxy-3-methylbut-2-enyl diphosphate. His-131 lines the dimethylallyl diphosphate pocket. His-131 serves as a coordination point for isopentenyl diphosphate. Glu-133 (proton donor) is an active-site residue. Residue Thr-170 coordinates (2E)-4-hydroxy-3-methylbut-2-enyl diphosphate. Cys-198 contributes to the [4Fe-4S] cluster binding site. Residues Ser-226, Asn-228, and Ser-271 each contribute to the (2E)-4-hydroxy-3-methylbut-2-enyl diphosphate site. Residues Ser-226, Asn-228, and Ser-271 each coordinate dimethylallyl diphosphate. Positions 226, 228, and 271 each coordinate isopentenyl diphosphate.

The protein belongs to the IspH family. It depends on [4Fe-4S] cluster as a cofactor.

The enzyme catalyses isopentenyl diphosphate + 2 oxidized [2Fe-2S]-[ferredoxin] + H2O = (2E)-4-hydroxy-3-methylbut-2-enyl diphosphate + 2 reduced [2Fe-2S]-[ferredoxin] + 2 H(+). It carries out the reaction dimethylallyl diphosphate + 2 oxidized [2Fe-2S]-[ferredoxin] + H2O = (2E)-4-hydroxy-3-methylbut-2-enyl diphosphate + 2 reduced [2Fe-2S]-[ferredoxin] + 2 H(+). The protein operates within isoprenoid biosynthesis; dimethylallyl diphosphate biosynthesis; dimethylallyl diphosphate from (2E)-4-hydroxy-3-methylbutenyl diphosphate: step 1/1. Its pathway is isoprenoid biosynthesis; isopentenyl diphosphate biosynthesis via DXP pathway; isopentenyl diphosphate from 1-deoxy-D-xylulose 5-phosphate: step 6/6. Its function is as follows. Catalyzes the conversion of 1-hydroxy-2-methyl-2-(E)-butenyl 4-diphosphate (HMBPP) into a mixture of isopentenyl diphosphate (IPP) and dimethylallyl diphosphate (DMAPP). Acts in the terminal step of the DOXP/MEP pathway for isoprenoid precursor biosynthesis. In Listeria monocytogenes serovar 1/2a (strain ATCC BAA-679 / EGD-e), this protein is 4-hydroxy-3-methylbut-2-enyl diphosphate reductase.